A 497-amino-acid polypeptide reads, in one-letter code: Acetyltransferase adrJ (497 aa).

Catalysis depends on proton acceptor residues histidine 174 and aspartate 422. A disordered region spans residues 430–451 (SSAQSSSQNTQKKGKPSYVNGV).

The protein belongs to the plant acyltransferase family. In terms of assembly, monomer.

It functions in the pathway secondary metabolite biosynthesis; terpenoid biosynthesis. Its function is as follows. Acetyltransferase; part of the gene cluster that mediates the biosynthesis of andrastins, meroterpenoid compounds that exhibit inhibitory activity against ras farnesyltransferase, suggesting that they could be promising leads for antitumor agents. The first step of the pathway is the synthesis of 3,5-dimethylorsellinic acid (DMOA) by the polyketide synthase adrD via condensation of one acetyl-CoA starter unit with 3 malonyl-CoA units and 2 methylations. DMAO is then converted to farnesyl-DMAO by the prenyltransferase adrG. The methyltransferase adrK catalyzes the methylation of the carboxyl group of farnesyl-DMAO to farnesyl-DMAO methyl ester which is further converted to epoxyfarnesyl-DMAO methyl ester by the FAD-dependent monooxygenase adrH. The terpene cyclase adrI then catalyzes the carbon skeletal rearrangement to generate the andrastin E, the first compound in the pathway having the andrastin scaffold, with the tetracyclic ring system. The post-cyclization tailoring enzymes adrF, adrE, adrJ, and adrA, are involved in the conversion of andrastin E into andrastin A. The short chain dehydrogenase adrF is responsible for the oxidation of the C-3 a hydroxyl group of andrastin E to yield the corresponding ketone, andrastin D. The ketoreductase adrE stereoselectively reduces the carbonyl moiety to reverse the stereochemistry of the C-3 position to yield andrastin F. The acetyltransferase adrJ is the acetyltransferase that attaches the acetyl group to the C-3 hydroxyl group of andrastin F to yield andrastin C. Finally, the cytochrome P450 monooxygenase adrA catalyzes two sequential oxidation reactions of the C-23 methyl group, to generate the corresponding alcohol andrastin B, and aldehyde andrastin A. The protein is Acetyltransferase adrJ of Penicillium rubens (strain ATCC 28089 / DSM 1075 / NRRL 1951 / Wisconsin 54-1255) (Penicillium chrysogenum).